We begin with the raw amino-acid sequence, 450 residues long: FAD-linked oxidoreductase penO (450 aa).

In terms of domain architecture, FAD-binding PCMH-type spans 32–203; that stretch reads PPELPYAIVK…TRFFIRTRPA (172 aa).

It belongs to the oxygen-dependent FAD-linked oxidoreductase family. Requires FAD as cofactor.

It participates in secondary metabolite biosynthesis. Its function is as follows. FAD-linked oxidoreductase; part of the gene cluster that mediates the biosynthesis of the indole diterpenes penitrems. The geranylgeranyl diphosphate (GGPP) synthase penG catalyzes the first step in penitrem biosynthesis via conversion of farnesyl pyrophosphate and isopentyl pyrophosphate into geranylgeranyl pyrophosphate (GGPP). Condensation of indole-3-glycerol phosphate with GGPP by the prenyl transferase penC then forms 3-geranylgeranylindole (3-GGI). Epoxidation by the FAD-dependent monooxygenase penM leads to a epoxidized-GGI that is substrate of the terpene cyclase penB for cyclization to yield paspaline. Paspaline is subsequently converted to 13-desoxypaxilline by the cytochrome P450 monooxygenase penP, the latter being then converted to paxilline by the cytochrome P450 monooxygenase penQ. Paxilline is converted to beta-paxitriol via C-10 ketoreduction by the short-chain dehydrogenase PC-15 which can be monoprenylated at the C-20 by the indole diterpene prenyltransferase penD. A two-step elimination (acetylation and elimination) process performed by the O-acetyltransferase PC-16 and the P.simplicissimum ptmI-ortholog not yet identified in P.crustosum, leads to the production of the prenylated form of penijanthine. The FAD-linked oxidoreductase ptmO then converts the prenylated form of penijanthine into PC-M5 which is in turn transformed into PC-M4 by the aromatic dimethylallyltransferase PC-22. A series of oxidation steps involving 4 cytochrome P450 monooxygenases (PC-21, PC-05, PC-23, PC-20) and a FAD-dependent monooxygenase (PC-14) are required for the transformation of PC-M4 to penitrems A and E. Synthesis of these final products is proposed to proceed via penitrems D and C (PC-21, PC-05, PC-14) and penitrems B and F (PC-21, PC-05, PC-14, PC-23). The sequence is that of FAD-linked oxidoreductase penO from Penicillium crustosum (Blue mold fungus).